The following is a 331-amino-acid chain: MTTTTHSTAAIMSLLDEAEWRQTQMDVGGLIQASALGKVALRYAVRKLMKRGARLRHDSGLYVCICDPSYEFLQMNLSKISWLERHCPPLDQELIMFGVIEAWEEASVRPTRQLVLFMTPKWDVFAYDSGILFFLAPSMAQFWHGAIVLEYWNALFPVEVRSHVRQHAHTMDDLVMVFHQLDYEKQVLEARRDKNTEGPRTFAKSVNSYVRAILESERRIREGKIPMTFVDRDSLRANSLAHIQATGAQPSHAPAQRVLSAPPSLPSPVSEEDPAAAATPPSSAATTPPSSVVPASVESELSSSPPLPPVVVKDVMYTAGEGDVVQMVVVV.

Residues 246 to 309 (TGAQPSHAPA…ELSSSPPLPP (64 aa)) are disordered. Over residues 275–304 (AAAATPPSSAATTPPSSVVPASVESELSSS) the composition is skewed to low complexity.

The protein belongs to the beta-herpesvirinae UL38 protein family. In terms of assembly, interacts with host MDM2; this interaction leads to the stabilization of host TP53. Interacts with host TSC2; this interaction prevents host cell stress responses. Interacts with host USP24.

The protein resides in the host cytoplasm. It is found in the host nucleus. Its function is as follows. Plays a role in the inhibition of host apoptosis to facilitate efficient viral replication. Promotes stabilization and inactivation of host TP53 through interaction with host MDM2. Induces host mTORC1 activation by antagonizing the ability of host TSC1/2 to negatively regulate mTORC1. Thus, inhibits a growth regulatory pathway to facilitate viral replication. Prevents premature cell host cell death by blocking host ubiquitin-specific protease 24/USP24-mediated autophagic ferritin degradation in lysosomes thus maintaining lysosome integrity and cellular viability. Involved in the activation of host ENO2 leading to enhanced glycolysis and UDP-sugar metabolism in order to enable the expression of viral glycoproteins. The polypeptide is Apoptosis inhibitor UL38 (UL38) (Human cytomegalovirus (strain Merlin) (HHV-5)).